A 71-amino-acid chain; its full sequence is Putative membrane protein insertion efficiency factor (71 aa).

It belongs to the UPF0161 family.

The protein resides in the cell membrane. In terms of biological role, could be involved in insertion of integral membrane proteins into the membrane. The polypeptide is Putative membrane protein insertion efficiency factor (Clostridium acetobutylicum (strain ATCC 824 / DSM 792 / JCM 1419 / IAM 19013 / LMG 5710 / NBRC 13948 / NRRL B-527 / VKM B-1787 / 2291 / W)).